The primary structure comprises 941 residues: PHD finger protein 14 (941 aa).

A disordered region spans residues 22–295 (DYDSSDDSDF…LSQSKSNEDS (274 aa)). Phosphoserine occurs at positions 26 and 29. Low complexity predominate over residues 36 to 47 (ASDSEGSGNGSE). Over residues 60-72 (DSEENILEEELNE) the composition is skewed to acidic residues. Composition is skewed to basic and acidic residues over residues 74-85 (IQVKEEQLKNST), 94-109 (QLIKMEKKEEEENGER), and 116-132 (KEKEKEKEREKDKEKAT). Phosphoserine is present on Ser84. A compositionally biased stretch (low complexity) spans 133–166 (VSDSAAASAAGTTPATSPPAVTSPSVPTTTTTTT). Ser189 bears the Phosphoserine mark. 2 stretches are compositionally biased toward acidic residues: residues 194–205 (NAMDDYDSEDDN) and 226–249 (DGDNEDDDDEGSGSEEDENDEGND). Tyr199 is modified (phosphotyrosine). Ser201 bears the Phosphoserine mark. Thr280 bears the Phosphothreonine mark. Positions 281-290 (NDSLTLSQSK) are enriched in polar residues. 5 positions are modified to phosphoserine: Ser283, Ser287, Ser291, Ser295, and Ser301. A PHD-type 1 zinc finger spans residues 312–373 (ILICCVCLGD…PWFCDACKCG (62 aa)). Positions 315, 318, 332, 335, 340, and 343 each coordinate Zn(2+). Position 352 is a phosphoserine (Ser352). Residues Cys367, Cys370, Cys378, Cys381, His398, Cys401, Cys434, Cys437, Cys451, Cys456, His461, Cys464, Cys488, and His491 each coordinate Zn(2+). Residues 375-408 (SPSCELCPNQDGIFKETDAGRWVHIVCALYVPGV) form a C2HC pre-PHD-type zinc finger. Residues 432–492 (KECSFCEDPR…PFFAYCKQHA (61 aa)) form a PHD-type 2 zinc finger. Ser523 carries the post-translational modification Phosphoserine. Positions 623-671 (MIQIQENMAEQKNIKDKLENEQEKLHVEYNKLCESLEELQNLNGKLRSE) form a coiled coil. The segment at 718-772 (LYSCGICKKNHDQHLLLLCDTCKLHYHLGCLDPPLTRMPRKTKNSYWQCSECDQA) adopts a PHD-type 3 zinc-finger fold. 8 residues coordinate Zn(2+): Cys721, Cys724, Cys736, Cys739, His744, Cys747, Cys766, and Cys769. A phosphoserine mark is found at Ser774, Ser775, and Ser828. A disordered region spans residues 804–855 (VPQDVPPEPKKIPIRNTRTRGRKRSFVPEEEKHEERVPRERRQRQSVLQKKP). The segment covering 829–843 (FVPEEEKHEERVPRE) has biased composition (basic and acidic residues). The PHD-type 4 zinc finger occupies 861-914 (RTECSTCKGTGDNENLVRCDECRLCYHFGCLDPPLKKSPKQTGYGWICQECDSS). Cys864, Cys867, Cys879, Cys882, His887, Cys890, Cys908, and Cys911 together coordinate Zn(2+). Residues 912-941 (DSSSSKEDENEAEKKNASQELSMEQKTPKK) are disordered. The segment covering 915-928 (SSKEDENEAEKKNA) has biased composition (basic and acidic residues). Over residues 930-941 (QELSMEQKTPKK) the composition is skewed to polar residues.

As to expression, high levels detected in testis, lung and spleen and low levels in muscle, heart, intestine and kidney (at protein level). Widely expressed in adult with increased levels in intestine, colon and lung.

The protein localises to the nucleus. The protein resides in the chromosome. It is found in the cytoplasm. Functionally, histone-binding protein. Binds preferentially to unmodified histone H3 but can also bind to a lesser extent to histone H3 trimethylated at 'Lys-9' (H3K9me3) as well as to histone H3 monomethylated at 'Lys-27' (H3K27ac) and trimethylated at 'Lys-27' (H3K27me3). Represses PDGFRA expression, thus playing a role in regulation of mesenchymal cell proliferation. Suppresses the expression of CDKN1A/p21 by reducing the level of trimethylation of histone H3 'Lys-4', leading to enhanced proliferation of germinal center B cells. This Mus musculus (Mouse) protein is PHD finger protein 14 (Phf14).